The primary structure comprises 306 residues: 3-methyl-2-oxobutanoate hydroxymethyltransferase (306 aa).

Residues D53 and D96 each contribute to the Mg(2+) site. 3-methyl-2-oxobutanoate-binding positions include 53–54 (DS), D96, and K126. E128 provides a ligand contact to Mg(2+). E195 serves as the catalytic Proton acceptor.

This sequence belongs to the PanB family. In terms of assembly, homodecamer; pentamer of dimers. Mg(2+) serves as cofactor.

The protein localises to the cytoplasm. The catalysed reaction is 3-methyl-2-oxobutanoate + (6R)-5,10-methylene-5,6,7,8-tetrahydrofolate + H2O = 2-dehydropantoate + (6S)-5,6,7,8-tetrahydrofolate. It functions in the pathway cofactor biosynthesis; (R)-pantothenate biosynthesis; (R)-pantoate from 3-methyl-2-oxobutanoate: step 1/2. In terms of biological role, catalyzes the reversible reaction in which hydroxymethyl group from 5,10-methylenetetrahydrofolate is transferred onto alpha-ketoisovalerate to form ketopantoate. The polypeptide is 3-methyl-2-oxobutanoate hydroxymethyltransferase (Anaeromyxobacter sp. (strain K)).